A 319-amino-acid polypeptide reads, in one-letter code: GPI-specific phospholipase A2-like PGAP3 (319 aa).

The signal sequence occupies residues 1 to 23 (MAGRTARLVLLAGAAALASGSQG). Residues 24–101 (DREPVYRDCV…GKWPFSRFLC (78 aa)) lie on the Lumenal side of the membrane. Asn40 carries an N-linked (GlcNAc...) asparagine glycan. Residues 102–122 (FQEPASAVASFLNGLASLVML) traverse the membrane as a helical segment. Topologically, residues 123 to 135 (CRYRTSVPASSPM) are cytoplasmic. The helical transmembrane segment at 136 to 156 (YPTCVAFAWVSLNAWFWSTVF) threads the bilayer. Topologically, residues 157–169 (HTRDTDLTEKMDY) are lumenal. A helical membrane pass occupies residues 170–190 (FCASTVILHSIYLCCVRTVGL). The Cytoplasmic segment spans residues 191 to 200 (QHPAMASAFR). The helical transmembrane segment at 201–221 (ALLLLLLTAHVSYLSLIHFDY) threads the bilayer. Residues 222–224 (GYN) are Lumenal-facing. Residues 225–245 (MAANVAIGLLNAAWWLAWCLW) form a helical membrane-spanning segment. At 246-257 (NQRLPHVHKCVA) the chain is on the cytoplasmic side. Residues 258–278 (VVLLLQGLSLLELLDFPPLFW) traverse the membrane as a helical segment. Residues 279-281 (VLD) lie on the Lumenal side of the membrane. The helical transmembrane segment at 282-302 (AHAIWHISTIPVHVLFFSFLE) threads the bilayer. Over 303–319 (DDSLYLLKESEAKVKLD) the chain is Cytoplasmic.

This sequence belongs to the PGAP3 family.

Its subcellular location is the golgi apparatus membrane. In terms of biological role, involved in the fatty acid remodeling steps of GPI-anchor maturation where the unsaturated acyl chain at sn-2 of inositol phosphate is replaced by a saturated stearoyl chain. May catalyze the first step of the fatty acid remodeling, by removing the unsaturated acyl chain at sn-2 of inositol phosphate, generating a lyso-GPI intermediate. The fatty acid remodeling steps is critical for the integration of GPI-APs into lipid rafts. The protein is GPI-specific phospholipase A2-like PGAP3 of Bos taurus (Bovine).